Reading from the N-terminus, the 360-residue chain is Uroporphyrinogen decarboxylase (360 aa).

Substrate-binding positions include Arg-31–Arg-35, Asp-81, Tyr-157, Thr-212, and His-333.

It belongs to the uroporphyrinogen decarboxylase family. As to quaternary structure, homodimer.

It localises to the cytoplasm. The catalysed reaction is uroporphyrinogen III + 4 H(+) = coproporphyrinogen III + 4 CO2. It participates in porphyrin-containing compound metabolism; protoporphyrin-IX biosynthesis; coproporphyrinogen-III from 5-aminolevulinate: step 4/4. Catalyzes the decarboxylation of four acetate groups of uroporphyrinogen-III to yield coproporphyrinogen-III. This Herminiimonas arsenicoxydans protein is Uroporphyrinogen decarboxylase.